A 531-amino-acid polypeptide reads, in one-letter code: Acetate CoA-transferase YdiF (531 aa).

Glutamate 333 functions as the 5-glutamyl coenzyme A thioester intermediate in the catalytic mechanism.

This sequence belongs to the 3-oxoacid CoA-transferase family. Homotetramer; dimer of dimers.

The catalysed reaction is an acyl-CoA + acetate = a carboxylate + acetyl-CoA. CoA transferase having broad substrate specificity for short-chain acyl-CoA thioesters with the activity decreasing when the length of the carboxylic acid chain exceeds four carbons. Exhibits high activity with acetoacetyl-CoA, propionyl-CoA, crotonoyl-CoA or butyryl-CoA as donors, with acetate as an acceptor. When acetyl-CoA is used as the donor, propionate, acetoacetate, butyrate, isobutyrate, and 4-hydroxybutyrate can be utilized as acceptors but not isovalerate. May play a role in short-chain fatty acid metabolism in E.coli. This Escherichia coli O157:H7 protein is Acetate CoA-transferase YdiF.